Consider the following 392-residue polypeptide: Outer membrane protein assembly factor BamB (392 aa).

The N-terminal stretch at 1 to 19 (MQLRKLLLPGLLSVTLLSG) is a signal peptide. A lipid anchor (N-palmitoyl cysteine) is attached at Cys20. Residue Cys20 is the site of S-diacylglycerol cysteine attachment.

Belongs to the BamB family. In terms of assembly, part of the Bam complex, which is composed of the outer membrane protein BamA, and four lipoproteins BamB, BamC, BamD and BamE.

It localises to the cell outer membrane. Part of the outer membrane protein assembly complex, which is involved in assembly and insertion of beta-barrel proteins into the outer membrane. The chain is Outer membrane protein assembly factor BamB from Salmonella typhimurium (strain LT2 / SGSC1412 / ATCC 700720).